The primary structure comprises 320 residues: o-succinylbenzoate synthase (320 aa).

The active-site Proton donor is Lys133. Mg(2+) contacts are provided by Asp161, Glu190, and Asp213. Lys235 acts as the Proton acceptor in catalysis.

The protein belongs to the mandelate racemase/muconate lactonizing enzyme family. MenC type 1 subfamily. Requires a divalent metal cation as cofactor.

The enzyme catalyses (1R,6R)-6-hydroxy-2-succinyl-cyclohexa-2,4-diene-1-carboxylate = 2-succinylbenzoate + H2O. The protein operates within quinol/quinone metabolism; 1,4-dihydroxy-2-naphthoate biosynthesis; 1,4-dihydroxy-2-naphthoate from chorismate: step 4/7. Its pathway is quinol/quinone metabolism; menaquinone biosynthesis. In terms of biological role, converts 2-succinyl-6-hydroxy-2,4-cyclohexadiene-1-carboxylate (SHCHC) to 2-succinylbenzoate (OSB). This chain is o-succinylbenzoate synthase, found in Salmonella paratyphi C (strain RKS4594).